Here is a 1088-residue protein sequence, read N- to C-terminus: Extended synaptotagmin-1 (1088 aa).

An N-acetylmethionine modification is found at methionine 1. Topologically, residues 1–30 are cytoplasmic; the sequence is MERSPEEGAGPEPSGQSPATDSTRERDGGS. The tract at residues 1 to 38 is disordered; that stretch reads MERSPEEGAGPEPSGQSPATDSTRERDGGSGVPPAGPG. Residues 31 to 51 traverse the membrane as a helical segment; the sequence is GVPPAGPGAASEALAVLTSFG. Residues 52 to 54 lie on the Lumenal side of the membrane; sequence RRL. Residues 55 to 75 form a helical membrane-spanning segment; that stretch reads LVLVPVYLAGAAGLSVGFVLF. At 76-1088 the chain is on the cytoplasmic side; the sequence is GLALYLGWRR…LIDDRDKGGS (1013 aa). The 179-residue stretch at 127–305 folds into the SMP-LTD domain; sequence DVEKAEWLNK…LPNRLLVPLV (179 aa). 4 consecutive C2 domains span residues 304-425, 446-572, 618-740, and 771-888; these read LVPD…DNWY, DAEK…QLSS, DAPP…DEWL, and QVNS…ALSG. At serine 316 the chain carries Phosphoserine; by CDK5. Ca(2+)-binding residues include lysine 336, aspartate 337, aspartate 349, aspartate 396, aspartate 398, aspartate 400, aspartate 402, and aspartate 403. The tract at residues 599 to 630 is disordered; that stretch reads TEPGAQDWDSESPETGSSVDAPPRPYHTTPNS. At lysine 806 the chain carries N6-acetyllysine. Phosphoserine is present on serine 809. A disordered region spans residues 911 to 930; that stretch reads HSHSSSSLNEEPEVLGDPTH. Serine 933 and serine 947 each carry phosphoserine. The C2 5 domain occupies 955–1077; that stretch reads PLGQVKLTVW…DLSQGAAQWY (123 aa). At tyrosine 993 the chain carries Phosphotyrosine. The tract at residues 1002–1009 is required for phosphatidylinositol 4,5-bisphosphate-dependent location at the cell membrane; it reads KNRGTKRK.

It belongs to the extended synaptotagmin family. Interacts with ESYT2 and ESYT3. Interacts with ADGRD1; inhibiting the G-protein-coupled receptor activity of ADGRD1. Interaction with ADGRD1 is abolished when cytosolic calcium increases, relieving ADGRD1 G-protein-coupled receptor activity. Interacts (phosphorylated form) with SLC2A4. Post-translationally, phosphorylated on Ser residues in insulin-treated adipocytes (in vitro); this promotes interaction with SLC2A4. As to expression, ubiquitously expressed with a higher expression in spleen and white adipose tissue.

The protein resides in the endoplasmic reticulum membrane. Its subcellular location is the cell membrane. Functionally, binds calcium (via the C2 domains) and translocates to sites of contact between the endoplasmic reticulum and the cell membrane in response to increased cytosolic calcium levels. Helps tether the endoplasmic reticulum to the cell membrane and promotes the formation of appositions between the endoplasmic reticulum and the cell membrane. Acts as an inhibitor of ADGRD1 G-protein-coupled receptor activity in absence of cytosolic calcium. Binds glycerophospholipids in a barrel-like domain and may play a role in cellular lipid transport. This is Extended synaptotagmin-1 (Esyt1) from Rattus norvegicus (Rat).